A 69-amino-acid chain; its full sequence is Cytochrome c oxidase subunit 8A, mitochondrial (69 aa).

The N-terminal 25 residues, 1–25 (MSVLTSLLLRGLTGSARWLPVPRAK), are a transit peptide targeting the mitochondrion. An SIFI-degron motif is present at residues 2 to 19 (SVLTSLLLRGLTGSARWL). Residues 26-36 (VHSMPPEVELG) lie on the Mitochondrial matrix side of the membrane. Residues 37-60 (IMEKAIGLTSCFVSLFLPAGWILS) form a helical membrane-spanning segment. The Mitochondrial intermembrane portion of the chain corresponds to 61-69 (HLEDYKRPE).

The protein belongs to the cytochrome c oxidase VIII family. In terms of assembly, component of the cytochrome c oxidase (complex IV, CIV), a multisubunit enzyme composed of 14 subunits. The complex is composed of a catalytic core of 3 subunits MT-CO1, MT-CO2 and MT-CO3, encoded in the mitochondrial DNA, and 11 supernumerary subunits COX4I, COX5A, COX5B, COX6A, COX6B, COX6C, COX7A, COX7B, COX7C, COX8 and NDUFA4, which are encoded in the nuclear genome. The complex exists as a monomer or a dimer and forms supercomplexes (SCs) in the inner mitochondrial membrane with NADH-ubiquinone oxidoreductase (complex I, CI) and ubiquinol-cytochrome c oxidoreductase (cytochrome b-c1 complex, complex III, CIII), resulting in different assemblies (supercomplex SCI(1)III(2)IV(1) and megacomplex MCI(2)III(2)IV(2)). In response to mitochondrial stress, the precursor protein is ubiquitinated by the SIFI complex in the cytoplasm before mitochondrial import, leading to its degradation. Within the SIFI complex, UBR4 initiates ubiquitin chain that are further elongated or branched by KCMF1.

It is found in the mitochondrion inner membrane. The protein operates within energy metabolism; oxidative phosphorylation. In terms of biological role, component of the cytochrome c oxidase, the last enzyme in the mitochondrial electron transport chain which drives oxidative phosphorylation. The respiratory chain contains 3 multisubunit complexes succinate dehydrogenase (complex II, CII), ubiquinol-cytochrome c oxidoreductase (cytochrome b-c1 complex, complex III, CIII) and cytochrome c oxidase (complex IV, CIV), that cooperate to transfer electrons derived from NADH and succinate to molecular oxygen, creating an electrochemical gradient over the inner membrane that drives transmembrane transport and the ATP synthase. Cytochrome c oxidase is the component of the respiratory chain that catalyzes the reduction of oxygen to water. Electrons originating from reduced cytochrome c in the intermembrane space (IMS) are transferred via the dinuclear copper A center (CU(A)) of subunit 2 and heme A of subunit 1 to the active site in subunit 1, a binuclear center (BNC) formed by heme A3 and copper B (CU(B)). The BNC reduces molecular oxygen to 2 water molecules using 4 electrons from cytochrome c in the IMS and 4 protons from the mitochondrial matrix. The protein is Cytochrome c oxidase subunit 8A, mitochondrial (COX8A) of Macaca silenus (Lion-tailed macaque).